Reading from the N-terminus, the 303-residue chain is Phytochrome-associated serine/threonine-protein phosphatase 3 (303 aa).

Zn(2+)-binding residues include aspartate 50, histidine 52, aspartate 78, and asparagine 110. Residue histidine 111 is the Proton donor of the active site. Histidine 160 and histidine 234 together coordinate Zn(2+).

This sequence belongs to the PPP phosphatase family. PP-6 (PP-V) subfamily. In terms of assembly, interacts with PHYA and PHYB, mostly when they are phosphorylated and in Pfr forms. Interacts with TAP46. Interacts with NRP. Interacts with PIN1 and PIN2. Interacts with ABI5. Interacts with PIF3 and PIF4. Protein phosphatase 6 (PP6) holoenzyme is a heterotrimeric complex formed by the catalytic subunit FYPP, a SAPS domain-containing subunit (SAL) and a protein phosphatase 2A regulatory subunit A (PP2AA). Requires Zn(2+) as cofactor. Mostly expressed in flowers. Also detected to a lower extent in stems and leaves. Expressed in roots.

It localises to the cytoplasm. It carries out the reaction O-phospho-L-seryl-[protein] + H2O = L-seryl-[protein] + phosphate. It catalyses the reaction O-phospho-L-threonyl-[protein] + H2O = L-threonyl-[protein] + phosphate. Functionally, catalytic subunit of protein phosphatase 6 (PP6). Dephosphorylates phosphorylated phytochromes, with a preference toward Pfr forms. Plays a major role in the photoperiodic control of flowering time in long days by modulating phytochrome signals in flowering time control. Involved in the regulation of polar auxin transport in roots. Dephosphorylates directly the auxin efflux carriers PIN1 and PIN2, thus promoting their proper polar localization in root cell plasma membrane. Acts antagonistically with the protein kinase PID to regulate the reversible phosphorylation of PIN and polar targeting, subsequently impacting polar auxin transport and plant development. Involved in the regulation of abscisic acid (ABA) signaling during seed germination and postgermination seedling growth. Functions as a negative regulator of ABA signaling through direct dephosphorylation and destabilization of ABI5 protein. Acts antagonistically with the protein kinase SRK2E/SNRK2.6 to regulate ABI5 phosphorylation and ABA responses. Involved in the regulation of phosphorylation status in hypocotyl phototropism. Involved in the negative regulation of photomorphogenesis by controlling the stability and transcriptional activity of PIF3 and PIF4 proteins in the dark, via the regulation of their phosphorylation status. This Arabidopsis thaliana (Mouse-ear cress) protein is Phytochrome-associated serine/threonine-protein phosphatase 3.